The chain runs to 180 residues: uncharacterized protein (180 aa).

Residues 114 to 147 are a coiled coil; it reads EDIYEDIVDVRLENQSLEEQLEDFKECSRALKKY.

The protein belongs to the mimivirus L74/L77/R857 family.

This is an uncharacterized protein from Acanthamoeba polyphaga mimivirus (APMV).